The sequence spans 87 residues: uncharacterized protein (87 aa).

This is an uncharacterized protein from Saccharomyces cerevisiae (strain ATCC 204508 / S288c) (Baker's yeast).